A 234-amino-acid polypeptide reads, in one-letter code: Uridylate kinase (234 aa).

Position 9–12 (9–12 (KLSG)) interacts with ATP. Gly51 contacts UMP. ATP is bound by residues Gly52 and Arg56. Residues Asp71 and 132-139 (CGNPFFTT) each bind UMP. ATP contacts are provided by Thr159, Tyr165, and Asp168.

It belongs to the UMP kinase family. Homohexamer.

It is found in the cytoplasm. It carries out the reaction UMP + ATP = UDP + ADP. Its pathway is pyrimidine metabolism; CTP biosynthesis via de novo pathway; UDP from UMP (UMPK route): step 1/1. With respect to regulation, inhibited by UTP. In terms of biological role, catalyzes the reversible phosphorylation of UMP to UDP. The polypeptide is Uridylate kinase (Prochlorococcus marinus (strain MIT 9312)).